The following is a 474-amino-acid chain: Cysteine protease ATG4A (474 aa).

The interval methionine 1–glutamine 32 is disordered. Cysteine 161 functions as the Nucleophile in the catalytic mechanism. Residues aspartate 358 and histidine 360 contribute to the active site. Over residues lysine 439–glycine 449 the composition is skewed to polar residues. The segment at lysine 439–leucine 474 is disordered.

Belongs to the peptidase C54 family. As to quaternary structure, interacts with ATG8.

Its subcellular location is the cytoplasm. It catalyses the reaction [protein]-C-terminal L-amino acid-glycyl-phosphatidylethanolamide + H2O = [protein]-C-terminal L-amino acid-glycine + a 1,2-diacyl-sn-glycero-3-phosphoethanolamine. In terms of biological role, cysteine protease that plays a key role in autophagy by mediating both proteolytic activation and delipidation of ATG8 family proteins. The protease activity is required for proteolytic activation of ATG8 family proteins: cleaves the C-terminal amino acid of ATG8 proteins to reveal a C-terminal glycine. Exposure of the glycine at the C-terminus is essential for ATG8 proteins conjugation to phosphatidylethanolamine (PE) and insertion to membranes, which is necessary for autophagy. In addition to the protease activity, also mediates delipidation of PE-conjugated ATG8 proteins. This Oryza sativa subsp. japonica (Rice) protein is Cysteine protease ATG4A (ATG4A).